We begin with the raw amino-acid sequence, 179 residues long: Signal peptidase complex subunit 3 (179 aa).

Topologically, residues 1–12 (MHTVLTRGNATV) are cytoplasmic. The helical; Signal-anchor for type II membrane protein transmembrane segment at 13–33 (AYTLSVLACLTFSCFLSTVFL) threads the bilayer. Residues 34 to 179 (DYRTDANINT…FPADYATSSI (146 aa)) are Lumenal-facing. N-linked (GlcNAc...) asparagine glycosylation is found at N73 and N141.

It belongs to the SPCS3 family. As to quaternary structure, component of the signal peptidase complex (SPC) composed of a catalytic subunit twr/SEC11 and three accessory subunits Spase12/SPCS1, Spase25/SPCS2 and Spase22-23/SPCS3. The complex induces a local thinning of the ER membrane which is used to measure the length of the signal peptide (SP) h-region of protein substrates. This ensures the selectivity of the complex towards h-regions shorter than 18-20 amino acids.

Its subcellular location is the endoplasmic reticulum membrane. Essential component of the signal peptidase complex (SPC) which catalyzes the cleavage of N-terminal signal sequences from nascent proteins as they are translocated into the lumen of the endoplasmic reticulum. Essential for the SPC catalytic activity, possibly by stabilizing and positioning the active center of the complex close to the lumenal surface. Its function is as follows. (Microbial infection) Plays an important role in infection by flaviviruses such as West Nile virus and Dengue virus type 2. In Drosophila melanogaster (Fruit fly), this protein is Signal peptidase complex subunit 3 (Spase22-23).